Consider the following 298-residue polypeptide: Glutamyl-Q tRNA(Asp) synthetase (298 aa).

L-glutamate is bound by residues 8–12 (RFAPS) and Glu-44. Residues 11 to 21 (PSPTGPLHFGS) carry the 'HIGH' region motif. Cys-100, Cys-102, Tyr-123, and Cys-127 together coordinate Zn(2+). Residues Tyr-183 and Arg-201 each contribute to the L-glutamate site. The 'KMSKS' region motif lies at 239 to 243 (KLSKQ). An ATP-binding site is contributed by Lys-242.

It belongs to the class-I aminoacyl-tRNA synthetase family. GluQ subfamily. Zn(2+) serves as cofactor.

Its function is as follows. Catalyzes the tRNA-independent activation of glutamate in presence of ATP and the subsequent transfer of glutamate onto a tRNA(Asp). Glutamate is transferred on the 2-amino-5-(4,5-dihydroxy-2-cyclopenten-1-yl) moiety of the queuosine in the wobble position of the QUC anticodon. The sequence is that of Glutamyl-Q tRNA(Asp) synthetase from Burkholderia orbicola (strain MC0-3).